Consider the following 239-residue polypeptide: Fibroblast growth factor 3 (239 aa).

Residues 1-17 (MGLIWLLLLSLLEPGWP) form the signal peptide. Asn-65 is a glycosylation site (N-linked (GlcNAc...) asparagine). The tract at residues 193–239 (QLQSGLPRPPGKGVQPRRRRQKQSPDNLEPSHVQASRLGSQLEASAH) is disordered. Polar residues predominate over residues 225–239 (VQASRLGSQLEASAH).

This sequence belongs to the heparin-binding growth factors family. Interacts with FGFR1 and FGFR2. Affinity between fibroblast growth factors (FGFs) and their receptors is increased by heparan sulfate glycosaminoglycans that function as coreceptors.

The protein localises to the secreted. Functionally, plays an important role in the regulation of embryonic development, cell proliferation, and cell differentiation. Required for normal ear development. This Homo sapiens (Human) protein is Fibroblast growth factor 3 (FGF3).